The sequence spans 107 residues: ATPase inhibitor, mitochondrial (107 aa).

The transit peptide at 1–25 directs the protein to the mitochondrion; it reads MAGSALAVRARLGVWGMRVLQTRGF. The interval 25-58 is disordered; it reads FGSDSSESMDSGAGSIREAGGAFGKREKAEEDRY. An N-terminal inhibitory region region spans residues 26–52; the sequence is GSDSSESMDSGAGSIREAGGAFGKREK. S39 is subject to Phosphoserine. Positions 48–58 are enriched in basic and acidic residues; sequence GKREKAEEDRY. Residues 60-107 adopt a coiled-coil conformation; that stretch reads REKTREQLAALKKHHEDEIDHHSKEIERLQKQIERHKKKIKYLKNSEH. The interval 74–106 is antiparallel alpha-helical coiled coil region; that stretch reads HEDEIDHHSKEIERLQKQIERHKKKIKYLKNSE. The residue at position 103 (K103) is an N6-succinyllysine.

It belongs to the ATPase inhibitor family. Homodimer; represents the active form and is present at a pH value below 6.5. Homotetramer; represents the inactive form and is present at a pH value above 7.0.

The protein resides in the mitochondrion. Endogenous F(1)F(o)-ATPase inhibitor limiting ATP depletion when the mitochondrial membrane potential falls below a threshold and the F(1)F(o)-ATP synthase starts hydrolyzing ATP to pump protons out of the mitochondrial matrix. Required to avoid the consumption of cellular ATP when the F(1)F(o)-ATP synthase enzyme acts as an ATP hydrolase. Indirectly acts as a regulator of heme synthesis in erythroid tissues: regulates heme synthesis by modulating the mitochondrial pH and redox potential, allowing FECH to efficiently catalyze the incorporation of iron into protoporphyrin IX to produce heme. In Rattus norvegicus (Rat), this protein is ATPase inhibitor, mitochondrial.